The primary structure comprises 110 residues: ATP-dependent Clp protease adapter protein ClpS (110 aa).

The protein belongs to the ClpS family. In terms of assembly, binds to the N-terminal domain of the chaperone ClpA.

Its function is as follows. Involved in the modulation of the specificity of the ClpAP-mediated ATP-dependent protein degradation. The sequence is that of ATP-dependent Clp protease adapter protein ClpS from Bartonella quintana (strain Toulouse) (Rochalimaea quintana).